The following is a 229-amino-acid chain: MGKKYKESTKLIDRKTLYTPLEAMELALKTAKANFDETIELSIKLGVDPRHADQQVRGAVVLPHGTGKKVRVLVLAKGDRIKEAEDAGADYVGAEEYVEKIQKENWFDFDVVVATPDMMGVVGRLGRILGPKGLMPNPKSGTVTFDVAKAIQEIKAGKVEYRVDKTSIVHVPIGKKSFEVQKLLDNFRVLMEAIIKAKPSAAKGQYLKSVAVSSTMGPGIKINSVKVLE.

The protein belongs to the universal ribosomal protein uL1 family. In terms of assembly, part of the 50S ribosomal subunit.

Its function is as follows. Binds directly to 23S rRNA. The L1 stalk is quite mobile in the ribosome, and is involved in E site tRNA release. Functionally, protein L1 is also a translational repressor protein, it controls the translation of the L11 operon by binding to its mRNA. The protein is Large ribosomal subunit protein uL1 of Clostridium kluyveri (strain ATCC 8527 / DSM 555 / NBRC 12016 / NCIMB 10680 / K1).